We begin with the raw amino-acid sequence, 59 residues long: Cortexin domain-containing 1 protein (59 aa).

The chain crosses the membrane as a helical span at residues 17 to 37 (LTLACFVFLCLFLVVMIIRCA).

It is found in the membrane. The polypeptide is Cortexin domain-containing 1 protein (Homo sapiens (Human)).